Consider the following 123-residue polypeptide: uncharacterized protein (123 aa).

The region spanning 17–117 (SNDNAFLVDV…NNQDKGWKQN (101 aa)) is the Rhodanese domain.

This is an uncharacterized protein from Rickettsia rickettsii.